We begin with the raw amino-acid sequence, 56 residues long: UPF0391 membrane protein Noc_0484 (56 aa).

2 consecutive transmembrane segments (helical) span residues 6 to 26 and 29 to 49; these read VTFLIVALVAALLGFTGIAGI and EIAWILFVVGIILFVVFLVLG.

It belongs to the UPF0391 family.

The protein localises to the cell membrane. The protein is UPF0391 membrane protein Noc_0484 of Nitrosococcus oceani (strain ATCC 19707 / BCRC 17464 / JCM 30415 / NCIMB 11848 / C-107).